The sequence spans 145 residues: Transcription antitermination protein NusB (145 aa).

This sequence belongs to the NusB family.

In terms of biological role, involved in transcription antitermination. Required for transcription of ribosomal RNA (rRNA) genes. Binds specifically to the boxA antiterminator sequence of the ribosomal RNA (rrn) operons. In Burkholderia ambifaria (strain MC40-6), this protein is Transcription antitermination protein NusB.